Reading from the N-terminus, the 481-residue chain is UDP-N-acetylmuramoylalanine--D-glutamate ligase (481 aa).

108 to 114 (GTNGKTS) lines the ATP pocket.

This sequence belongs to the MurCDEF family.

The protein localises to the cytoplasm. The catalysed reaction is UDP-N-acetyl-alpha-D-muramoyl-L-alanine + D-glutamate + ATP = UDP-N-acetyl-alpha-D-muramoyl-L-alanyl-D-glutamate + ADP + phosphate + H(+). Its pathway is cell wall biogenesis; peptidoglycan biosynthesis. Cell wall formation. Catalyzes the addition of glutamate to the nucleotide precursor UDP-N-acetylmuramoyl-L-alanine (UMA). The polypeptide is UDP-N-acetylmuramoylalanine--D-glutamate ligase (Bifidobacterium longum subsp. infantis (strain ATCC 15697 / DSM 20088 / JCM 1222 / NCTC 11817 / S12)).